A 1433-amino-acid polypeptide reads, in one-letter code: Regulatory protein CAT8 (1433 aa).

The segment covering 20–38 (GSQALSGPSISNRTSSSEA) has biased composition (polar residues). A disordered region spans residues 20 to 40 (GSQALSGPSISNRTSSSEANP). A DNA-binding region (zn(2)-C6 fungal-type) is located at residues 70 to 97 (CDRCRSKKTRCDGKRPQCSQCAAVGFEC). Residues 936–946 (KPLFGSQSKNS) are compositionally biased toward polar residues. Disordered stretches follow at residues 936–1024 (KPLF…DTKK), 1137–1162 (QNPE…NNLS), 1200–1236 (SASA…ILGS), and 1324–1433 (LNPT…QNAK). Composition is skewed to basic and acidic residues over residues 947-965 (LENR…EHEY) and 994-1005 (LKYEKDAKRNAK). Polar residues-rich tracts occupy residues 1138 to 1162 (NPEN…NNLS), 1221 to 1235 (PPST…SILG), and 1326 to 1348 (PTDS…SNQR). Positions 1349-1362 (SLSSGNDSKGDSSS) are enriched in low complexity. 2 stretches are compositionally biased toward polar residues: residues 1363–1391 (QENS…SGPS) and 1418–1433 (SNTD…QNAK).

Post-translationally, could be the target of the SNF1/CAT1 - SNF4/CAT3 kinase complex.

It localises to the nucleus. Functionally, activator of the gluconeogenic enzymes FBP1 and PCK1 genes. This Saccharomyces cerevisiae (strain ATCC 204508 / S288c) (Baker's yeast) protein is Regulatory protein CAT8 (CAT8).